The primary structure comprises 680 residues: Protein FAR1-RELATED SEQUENCE 11 (680 aa).

The segment at 1-36 is disordered; that stretch reads MSDDPGQMLLIYDDPSDQRSLSLDDASSTEESPDDN. The FAR1 domain maps to 62–156; it reads EFYSTFAKRC…ANHHNHELLE (95 aa). Positions 277–373 constitute an MULE domain; that stretch reads AVVFDTTHRL…CIWMVVGKFP (97 aa). The SWIM-type zinc-finger motif lies at 556 to 589; that stretch reads YWVPQEGIISCSCQLFEFSGFLCRHALRVLSTGN.

It belongs to the FHY3/FAR1 family. Expressed in hypocotyls, rosette and cauline leaves, inflorescences stems, flowers and siliques.

It localises to the nucleus. Putative transcription activator involved in regulating light control of development. The protein is Protein FAR1-RELATED SEQUENCE 11 (FRS11) of Arabidopsis thaliana (Mouse-ear cress).